The sequence spans 1076 residues: Cytadherence high molecular weight protein 3 (1076 aa).

Residues 264-284 (QGYDQGYDQQYDQQGYDQQGY) are fibronectin-binding. Over residues 326-335 (QQPVEVAKPA) the composition is skewed to low complexity. The disordered stretch occupies residues 326 to 351 (QQPVEVAKPAPTKPVGPKPQPGKKAT). The span at 336–345 (PTKPVGPKPQ) shows a compositional bias: pro residues. The stretch at 562 to 616 (EITKLEELVEIKTDNTESLNKLETLIDENKKIIDQFKQLKEEAKKSNSNINLEKV) forms a coiled coil. Disordered stretches follow at residues 789–808 (SREH…TTRI) and 850–873 (RINP…EQQP). Over residues 797–806 (PKAQHQQPTT) the composition is skewed to polar residues. The segment covering 862-873 (YEQPDPYQEQQP) has biased composition (low complexity).

The protein localises to the cell projection. Its subcellular location is the attachment organelle membrane. Functionally, binds immobilized fibronectin. Its function is as follows. Component of the cytoskeleton-like structure which stabilizes the shape of the wall-less mycoplasma. This cytoskeleton-like network of accessory proteins containing HMW proteins 1 to 5 allows the proper anchoring of cytadhesin proteins in the mycoplasmal membrane at the attachment organelle. Essential for successful surface parasitism. This Mycoplasmoides gallisepticum (strain R(low / passage 15 / clone 2)) (Mycoplasma gallisepticum) protein is Cytadherence high molecular weight protein 3 (hlp3).